Consider the following 483-residue polypeptide: SWI/SNF-related matrix-associated actin-dependent regulator of chromatin subfamily D member 3 (483 aa).

Alanine 2 carries the post-translational modification N-acetylalanine. The interval 26 to 102 (VRPGMPSGAR…ARSRSAKRRK (77 aa)) is disordered. Residues 78–87 (QSQAQSQGQP) are compositionally biased toward low complexity. Serine 178 carries the post-translational modification Phosphoserine. The SWIB/MDM2 domain maps to 258-335 (YQPPQFKLDP…PQRLTALLLP (78 aa)).

It belongs to the SMARCD family. In terms of assembly, component of the multiprotein chromatin-remodeling complexes SWI/SNF: SWI/SNF-A (BAF), SWI/SNF-B (PBAF) and related complexes. The canonical complex contains a catalytic subunit (either SMARCA4/BRG1/BAF190A or SMARCA2/BRM/BAF190B) and at least SMARCE1, ACTL6A/BAF53, SMARCC1/BAF155, SMARCC2/BAF170, and SMARCB1/SNF5/BAF47. Other subunits specific to each of the complexes may also be present permitting several possible combinations developmentally and tissue specific. Component of the BAF complex, which includes at least actin (ACTB), ARID1A/BAF250A, ARID1B/BAF250B, SMARCA2/BRM, SMARCA4/BRG1/BAF190A, ACTL6A/BAF53, ACTL6B/BAF53B, SMARCE1/BAF57, SMARCC1/BAF155, SMARCC2/BAF170, SMARCB1/SNF5/INI1, and one or more SMARCD1/BAF60A, SMARCD2/BAF60B, or SMARCD3/BAF60C. In muscle cells, the BAF complex also contains DPF3. Component of neural progenitors-specific chromatin remodeling complex (npBAF complex) composed of at least, ARID1A/BAF250A or ARID1B/BAF250B, SMARCD1/BAF60A, SMARCD3/BAF60C, SMARCA2/BRM/BAF190B, SMARCA4/BRG1/BAF190A, SMARCB1/BAF47, SMARCC1/BAF155, SMARCE1/BAF57, SMARCC2/BAF170, PHF10/BAF45A, ACTL6A/BAF53A and actin. Component of neuron-specific chromatin remodeling complex (nBAF complex) composed of at least, ARID1A/BAF250A or ARID1B/BAF250B, SMARCD1/BAF60A, SMARCD3/BAF60C, SMARCA2/BRM/BAF190B, SMARCA4/BRG1/BAF190A, SMARCB1/BAF47, SMARCC1/BAF155, SMARCE1/BAF57, SMARCC2/BAF170, DPF1/BAF45B, DPF3/BAF45C, ACTL6B/BAF53B and actin. May be a component of the SWI/SNF-B (PBAF) chromatin remodeling complex, at least composed of SMARCA4/BRG1, SMARCB1/BAF47/SNF5, ACTL6A/BAF53A or ACTL6B/BAF53B, SMARCE1/BAF57, SMARCD1/BAF60A, SMARCD2/BAF60B, perhaps SMARCD3/BAF60C, SMARCC1/BAF155, SMARCC2/BAF170, PBRM1/BAF180, ARID2/BAF200 and actin. Interacts with SMARCA4/BRG1/BAF190A. Component of SWI/SNF (GBAF) subcomplex, which includes at least BICRA or BICRAL (mutually exclusive), BRD9, SS18, SMARCA2/BRM, SMARCA4/BRG1/BAF190A, ACTL6A/BAF53, SMARCC1/BAF155, and SMARCD1/BAF60A. The precise distribution of the related SMARCD1, SMARCD2 and SMARCD3 proteins among these and other SWI/SNF nucleosome-remodeling complexes is not fully known. May allow recruitment of SWI/SNF containing complexes specifically to promoters where these factors are located. Also interacts with several nuclear receptors including PPARG/NR1C3, RXRA/NR1F1, ESR1, NR5A1, NR5A2/LRH1 and other transcriptional activators including the HLH protein SREBF1/SREBP1 and the homeobox protein PBX1. Interacts with PRDM1/BLIMP1. In terms of tissue distribution, isoform 2 and isoform 1 are expressed in brain, heart, kidney, placenta, prostate, salivary gland, spleen, testis, thyroid, trachea and uterus. Isoform 1 is also expressed in skeletal muscle and adipose tissue.

The protein localises to the nucleus. Its function is as follows. Involved in transcriptional activation and repression of select genes by chromatin remodeling (alteration of DNA-nucleosome topology). Component of SWI/SNF chromatin remodeling complexes that carry out key enzymatic activities, changing chromatin structure by altering DNA-histone contacts within a nucleosome in an ATP-dependent manner. Stimulates nuclear receptor mediated transcription. Belongs to the neural progenitors-specific chromatin remodeling complex (npBAF complex) and the neuron-specific chromatin remodeling complex (nBAF complex). During neural development a switch from a stem/progenitor to a postmitotic chromatin remodeling mechanism occurs as neurons exit the cell cycle and become committed to their adult state. The transition from proliferating neural stem/progenitor cells to postmitotic neurons requires a switch in subunit composition of the npBAF and nBAF complexes. As neural progenitors exit mitosis and differentiate into neurons, npBAF complexes which contain ACTL6A/BAF53A and PHF10/BAF45A, are exchanged for homologous alternative ACTL6B/BAF53B and DPF1/BAF45B or DPF3/BAF45C subunits in neuron-specific complexes (nBAF). The npBAF complex is essential for the self-renewal/proliferative capacity of the multipotent neural stem cells. The nBAF complex along with CREST plays a role regulating the activity of genes essential for dendrite growth. The polypeptide is SWI/SNF-related matrix-associated actin-dependent regulator of chromatin subfamily D member 3 (SMARCD3) (Homo sapiens (Human)).